A 323-amino-acid chain; its full sequence is Aspartate carbamoyltransferase catalytic subunit (323 aa).

Carbamoyl phosphate contacts are provided by Arg-71 and Thr-72. Position 99 (Lys-99) interacts with L-aspartate. 3 residues coordinate carbamoyl phosphate: Arg-121, His-151, and Gln-154. Residues Arg-184 and Arg-239 each coordinate L-aspartate. Residues Gly-280 and Pro-281 each contribute to the carbamoyl phosphate site.

This sequence belongs to the aspartate/ornithine carbamoyltransferase superfamily. ATCase family. In terms of assembly, heterododecamer (2C3:3R2) of six catalytic PyrB chains organized as two trimers (C3), and six regulatory PyrI chains organized as three dimers (R2).

The enzyme catalyses carbamoyl phosphate + L-aspartate = N-carbamoyl-L-aspartate + phosphate + H(+). It functions in the pathway pyrimidine metabolism; UMP biosynthesis via de novo pathway; (S)-dihydroorotate from bicarbonate: step 2/3. Functionally, catalyzes the condensation of carbamoyl phosphate and aspartate to form carbamoyl aspartate and inorganic phosphate, the committed step in the de novo pyrimidine nucleotide biosynthesis pathway. The sequence is that of Aspartate carbamoyltransferase catalytic subunit from Cupriavidus taiwanensis (strain DSM 17343 / BCRC 17206 / CCUG 44338 / CIP 107171 / LMG 19424 / R1) (Ralstonia taiwanensis (strain LMG 19424)).